A 323-amino-acid polypeptide reads, in one-letter code: tRNA dimethylallyltransferase (323 aa).

Residue 12 to 19 (GPTAAGKT) participates in ATP binding. A substrate-binding site is contributed by 14–19 (TAAGKT). Interaction with substrate tRNA regions lie at residues 37 to 40 (DSAL) and 161 to 165 (QRLIR).

This sequence belongs to the IPP transferase family. In terms of assembly, monomer. It depends on Mg(2+) as a cofactor.

It catalyses the reaction adenosine(37) in tRNA + dimethylallyl diphosphate = N(6)-dimethylallyladenosine(37) in tRNA + diphosphate. Functionally, catalyzes the transfer of a dimethylallyl group onto the adenine at position 37 in tRNAs that read codons beginning with uridine, leading to the formation of N6-(dimethylallyl)adenosine (i(6)A). This is tRNA dimethylallyltransferase from Pseudomonas savastanoi pv. phaseolicola (strain 1448A / Race 6) (Pseudomonas syringae pv. phaseolicola (strain 1448A / Race 6)).